A 358-amino-acid chain; its full sequence is Dual-specificity RNA methyltransferase RlmN (358 aa).

The active-site Proton acceptor is Glu86. The Radical SAM core domain occupies 105 to 338; that stretch reads RHKRYTICVS…CTIRQSKGLD (234 aa). Residues Cys112 and Cys343 are joined by a disulfide bond. Cys119, Cys123, and Cys126 together coordinate [4Fe-4S] cluster. Residues 169–170, Ser201, 224–226, and Asn300 each bind S-adenosyl-L-methionine; these read GE and SLH. Cys343 serves as the catalytic S-methylcysteine intermediate.

The protein belongs to the radical SAM superfamily. RlmN family. Requires [4Fe-4S] cluster as cofactor.

The protein resides in the cytoplasm. It carries out the reaction adenosine(2503) in 23S rRNA + 2 reduced [2Fe-2S]-[ferredoxin] + 2 S-adenosyl-L-methionine = 2-methyladenosine(2503) in 23S rRNA + 5'-deoxyadenosine + L-methionine + 2 oxidized [2Fe-2S]-[ferredoxin] + S-adenosyl-L-homocysteine. It catalyses the reaction adenosine(37) in tRNA + 2 reduced [2Fe-2S]-[ferredoxin] + 2 S-adenosyl-L-methionine = 2-methyladenosine(37) in tRNA + 5'-deoxyadenosine + L-methionine + 2 oxidized [2Fe-2S]-[ferredoxin] + S-adenosyl-L-homocysteine. Its function is as follows. Specifically methylates position 2 of adenine 2503 in 23S rRNA and position 2 of adenine 37 in tRNAs. m2A2503 modification seems to play a crucial role in the proofreading step occurring at the peptidyl transferase center and thus would serve to optimize ribosomal fidelity. In Campylobacter hominis (strain ATCC BAA-381 / DSM 21671 / CCUG 45161 / LMG 19568 / NCTC 13146 / CH001A), this protein is Dual-specificity RNA methyltransferase RlmN.